The following is a 901-amino-acid chain: Cyanophycin synthetase (901 aa).

The 255-residue stretch at 224–478 (KRILAASGVP…VAGAVMDMLF (255 aa)) folds into the ATP-grasp domain. ATP is bound at residue 493–499 (GTNGKTT).

The protein in the C-terminal section; belongs to the MurCDEF family. In terms of assembly, homodimer.

The catalysed reaction is [L-4-(L-arginin-2-N-yl)aspartate](n) + L-aspartate + ATP = [L-4-(L-arginin-2-N-yl)aspartate](n)-L-aspartate + ADP + phosphate + H(+). The enzyme catalyses [L-4-(L-arginin-2-N-yl)aspartate](n)-L-aspartate + L-arginine + ATP = [L-4-(L-arginin-2-N-yl)aspartate](n+1) + ADP + phosphate + H(+). In terms of biological role, catalyzes the ATP-dependent polymerization of arginine and aspartate to multi-L-arginyl-poly-L-aspartic acid (cyanophycin; a water-insoluble reserve polymer). The polypeptide is Cyanophycin synthetase (cphA) (Trichormus variabilis (strain ATCC 29413 / PCC 7937) (Anabaena variabilis)).